The following is a 251-amino-acid chain: Hydroxyacylglutathione hydrolase (251 aa).

Zn(2+) is bound by residues H55, H57, D59, H60, H112, D131, and H169.

It belongs to the metallo-beta-lactamase superfamily. Glyoxalase II family. Monomer. Zn(2+) serves as cofactor.

The enzyme catalyses an S-(2-hydroxyacyl)glutathione + H2O = a 2-hydroxy carboxylate + glutathione + H(+). Its pathway is secondary metabolite metabolism; methylglyoxal degradation; (R)-lactate from methylglyoxal: step 2/2. Functionally, thiolesterase that catalyzes the hydrolysis of S-D-lactoyl-glutathione to form glutathione and D-lactic acid. This chain is Hydroxyacylglutathione hydrolase, found in Erythrobacter litoralis (strain HTCC2594).